The following is a 152-amino-acid chain: MQLTELIETTVTGLGYELVDLERTGRGMLCIYIDQLAGISLEDCEKVTRQLQHVLTVENIDYERLEVSSPGLDRPLKKLADFERFAGSEVSVTLKKPLDGRKTYRGILHAPNGETIGLEFEGKKGEAAMLDFTLADIDKARLIPQVDFRSRK.

This sequence belongs to the RimP family.

It localises to the cytoplasm. In terms of biological role, required for maturation of 30S ribosomal subunits. This chain is Ribosome maturation factor RimP, found in Burkholderia ambifaria (strain MC40-6).